The primary structure comprises 271 residues: Putative phosphoenolpyruvate synthase regulatory protein (271 aa).

152-159 (GVSRCGKT) serves as a coordination point for ADP.

It belongs to the pyruvate, phosphate/water dikinase regulatory protein family. PSRP subfamily.

It carries out the reaction [pyruvate, water dikinase] + ADP = [pyruvate, water dikinase]-phosphate + AMP + H(+). It catalyses the reaction [pyruvate, water dikinase]-phosphate + phosphate + H(+) = [pyruvate, water dikinase] + diphosphate. Functionally, bifunctional serine/threonine kinase and phosphorylase involved in the regulation of the phosphoenolpyruvate synthase (PEPS) by catalyzing its phosphorylation/dephosphorylation. In Legionella pneumophila (strain Corby), this protein is Putative phosphoenolpyruvate synthase regulatory protein.